Consider the following 591-residue polypeptide: Zinc finger protein 48 (591 aa).

Met-1 carries the N-acetylmethionine modification. Disordered stretches follow at residues 1-24 and 55-80; these read MEASPGDEFEHSPQERDGPEIKEE and GLGKRQPRDPVPRILGEPRWGQGSND. Composition is skewed to basic and acidic residues over residues 8–24 and 55–65; these read EFEHSPQERDGPEIKEE and GLGKRQPRDPV. Ser-12 is subject to Phosphoserine. Lys-58 is covalently cross-linked (Glycyl lysine isopeptide (Lys-Gly) (interchain with G-Cter in SUMO2)). 2 consecutive C2H2-type zinc fingers follow at residues 83–105 and 111–133; these read AVCGECGKSFRQMSDLVKHQRTH and YKCGVCGKGFGDSSARIKHQRTH. The disordered stretch occupies residues 131-160; sequence RTHTGEKAYRVRPPAPGPPKMPRSRIPAGE. Lys-150 is covalently cross-linked (Glycyl lysine isopeptide (Lys-Gly) (interchain with G-Cter in SUMO2)). 2 C2H2-type zinc fingers span residues 163-185 and 191-213; these read TICGECGKSFRQSSDLVKHQRTH and YKCGICGKGFGDSSARIKHQRTH. Residues 206–241 are disordered; the sequence is RIKHQRTHRGDQLPRPVVPRRQPSPAAPAAPHRPKA. Low complexity predominate over residues 224–235; it reads PRRQPSPAAPAA. Residue Lys-240 forms a Glycyl lysine isopeptide (Lys-Gly) (interchain with G-Cter in SUMO2) linkage. C2H2-type zinc fingers lie at residues 246–268 and 274–296; these read YICTDCGKRFVLSCSLLSHQRSH and FGCDVCGKEFARGSDLVKHLRVH. Lys-300 is covalently cross-linked (Glycyl lysine isopeptide (Lys-Gly) (interchain with G-Cter in SUMO2)). 2 consecutive C2H2-type zinc fingers follow at residues 302 to 324 and 330 to 352; these read YLCPECGKGFADSSARVKHLRTH and HACPECNRSFSLSSTLLRHRLTH. Residues 372 to 429 are disordered; that stretch reads PPPPPLGTSPSLTPRSPSHSSDGPFGLPGLEPEPGGPQAGEPPPPLAGDKPHKCPECG. Low complexity predominate over residues 379–404; that stretch reads TSPSLTPRSPSHSSDGPFGLPGLEPE. The C2H2-type 9 zinc-finger motif lies at 423-445; that stretch reads HKCPECGKGFRRSSDLVKHHRVH. Residue Lys-449 forms a Glycyl lysine isopeptide (Lys-Gly) (interchain with G-Cter in SUMO2) linkage. The segment at 451-473 adopts a C2H2-type 10 zinc-finger fold; it reads YLCPECGKGFADSSARVKHLRTH. A disordered region spans residues 464–512; the sequence is SARVKHLRTHQGERTRPPPPPSTLLRPHNPPGSVPIVPQSRVQGRPSGP. Residues 480-496 show a composition bias toward pro residues; it reads PPPPPSTLLRPHNPPGS. 2 C2H2-type zinc fingers span residues 516–538 and 544–566; these read HVCGFCGKEFPRSSDLVKHRRTH and YKCAECGKGFGDSSARIKHQRGH. The disordered stretch occupies residues 564 to 591; the sequence is RGHLALKPFGVGDGPPRPLKEESPAGLE. Positions 581–591 are enriched in basic and acidic residues; it reads PLKEESPAGLE. Lys-583 is covalently cross-linked (Glycyl lysine isopeptide (Lys-Gly) (interchain with G-Cter in SUMO2)).

Belongs to the krueppel C2H2-type zinc-finger protein family.

The protein localises to the nucleus. May be involved in transcriptional regulation. The polypeptide is Zinc finger protein 48 (Znf48) (Mus musculus (Mouse)).